A 356-amino-acid chain; its full sequence is Heme A synthase (356 aa).

5 consecutive transmembrane segments (helical) span residues 24-44, 106-126, 139-159, 174-194, and 214-234; these read IAIWLLICCALVFAMIVVGGV, FHRLLGRLIGLVYFIPFVYFM, LLGIFALGALQGLMGWYMVMS, AHLGLAFVIYAAMFWVATGLI, and AWMLTGLIFVMVLSGGLVAGI. His276 is a binding site for heme. The next 3 helical transmembrane spans lie at 278-298, 309-329, and 331-351; these read LIAWLLIFSIPWFWFKAKQLS, LLLLMLLIQAGLGITTLLLSV, and LTFATAHQAGAVLLFTAALWV. His337 is a heme binding site.

It belongs to the COX15/CtaA family. Type 2 subfamily. Interacts with CtaB. Heme b serves as cofactor.

The protein resides in the cell membrane. The enzyme catalyses Fe(II)-heme o + 2 A + H2O = Fe(II)-heme a + 2 AH2. Its pathway is porphyrin-containing compound metabolism; heme A biosynthesis; heme A from heme O: step 1/1. Catalyzes the conversion of heme O to heme A by two successive hydroxylations of the methyl group at C8. The first hydroxylation forms heme I, the second hydroxylation results in an unstable dihydroxymethyl group, which spontaneously dehydrates, resulting in the formyl group of heme A. In Nitrosomonas eutropha (strain DSM 101675 / C91 / Nm57), this protein is Heme A synthase.